The sequence spans 813 residues: G-type lectin S-receptor-like serine/threonine-protein kinase LECRK1 (813 aa).

A signal peptide spans 1-19; the sequence is MVALLLFPMLLQLLSPTCA. Residues 20–466 are Extracellular-facing; it reads QTQKNITLGS…NRKHWVLGSS (447 aa). A Bulb-type lectin domain is found at 22–149; sequence QKNITLGSTL…DGTTKWQTFD (128 aa). Asn-24, Asn-57, Asn-164, Asn-168, Asn-219, and Asn-242 each carry an N-linked (GlcNAc...) asparagine glycan. The EGF-like; atypical domain maps to 293–346; the sequence is PQNICHAIVSDVGSGVCGFNSYCTFDGTRNQIASCQCPPWYKFFDEQKKYKGCK. 5 cysteine pairs are disulfide-bonded: Cys-297/Cys-315, Cys-309/Cys-327, Cys-329/Cys-345, Cys-391/Cys-413, and Cys-395/Cys-401. The PAN domain maps to 354–433; it reads CDLDEATALA…NMADYVQRTV (80 aa). Asn-407 and Asn-441 each carry an N-linked (GlcNAc...) asparagine glycan. Residues 467-487 form a helical membrane-spanning segment; that stretch reads LILGTSILVNFALISIFLFGT. The Cytoplasmic portion of the chain corresponds to 488-813; that stretch reads YCRIATKKNI…DPCSFISSLP (326 aa). The 275-residue stretch at 523–797 folds into the Protein kinase domain; the sequence is AGFHEILGAG…KVTQMLDGAV (275 aa). ATP contacts are provided by residues 529–537 and Lys-553; that span reads LGAGASGVV. Asp-647 (proton acceptor) is an active-site residue.

This sequence belongs to the protein kinase superfamily. Ser/Thr protein kinase family.

The protein resides in the membrane. The enzyme catalyses L-seryl-[protein] + ATP = O-phospho-L-seryl-[protein] + ADP + H(+). The catalysed reaction is L-threonyl-[protein] + ATP = O-phospho-L-threonyl-[protein] + ADP + H(+). Its function is as follows. Involved in innate immunity. Required for the expression of defense-related genes PR1A, LOX2 and CHS1 upon biotic stresses. Required for basal resistance to the fungal blast (M.grisea), bacterial blight (X.oryzae pv. oryzae, Xoo) and the herbivorous insect brown planthopper (N.lugens, BPH). May be involved in several defense signaling pathways. Involved in the promotion of seed germination. Required for the expression of alpha-amylase genes during seed germination. Involved in resistance against the herbivorous insect brown planthopper (N.lugens, BPH). Member of the BPH3 (BPH resistance locus 3) cluster which contains LECRK1, LECRK2 and LECRK3. The polypeptide is G-type lectin S-receptor-like serine/threonine-protein kinase LECRK1 (Oryza sativa subsp. japonica (Rice)).